The sequence spans 75 residues: MTVIRLTKMGRKKRPFYRIVVTDSRKRRDGSWIESIGYYNPMVEPEVVKFDAERLAYWKSVGAKLSDRVAAITSK.

The protein belongs to the bacterial ribosomal protein bS16 family.

The sequence is that of Small ribosomal subunit protein bS16 from Campylobacter lari (strain RM2100 / D67 / ATCC BAA-1060).